The chain runs to 269 residues: Hydroxypyruvate/pyruvate aldolase (269 aa).

Catalysis depends on His47, which acts as the Proton acceptor. A divalent metal cation contacts are provided by Glu151 and Asp177.

It belongs to the HpcH/HpaI aldolase family. It depends on a divalent metal cation as a cofactor.

The enzyme catalyses D-glyceraldehyde + 3-hydroxypyruvate = 2-dehydro-D-gluconate. It catalyses the reaction D-glyceraldehyde + 3-hydroxypyruvate = (3R,4S,5R)-3,4,5,6-tetrahydroxy-2-oxohexanoate. The catalysed reaction is D-glyceraldehyde + 3-hydroxypyruvate = 2-dehydro-D-galactonate. It carries out the reaction D-glyceraldehyde + pyruvate = 2-dehydro-3-deoxy-L-galactonate. The enzyme catalyses 2-dehydro-3-deoxy-D-gluconate = D-glyceraldehyde + pyruvate. Aldolase which can catalyze in vitro the aldolisation reaction between hydroxypyruvate (HPA) or pyruvate (PA) and D-glyceraldehyde (D-GA). The condensation of hydroxypyruvate and D-glyceraldehyde produces 2-dehydro-D-gluconate as the major product, (3R,4S,5R)-3,4,5,6-tetrahydroxy-2-oxohexanoate and 2-dehydro-D-galactonate. The condensation of pyruvate and D-glyceraldehyde produces 2-dehydro-3-deoxy-L-galactonate as the major product and 2-dehydro-3-deoxy-D-gluconate. This is Hydroxypyruvate/pyruvate aldolase from Cupriavidus necator (strain ATCC 17699 / DSM 428 / KCTC 22496 / NCIMB 10442 / H16 / Stanier 337) (Ralstonia eutropha).